The sequence spans 76 residues: UPF0291 protein GWCH70_1239 (76 aa).

Residues 54–76 (VIDPNGNDVTPKKLKESQKSRLH) form a disordered region. Residues 63 to 76 (TPKKLKESQKSRLH) are compositionally biased toward basic and acidic residues.

Belongs to the UPF0291 family.

It localises to the cytoplasm. The polypeptide is UPF0291 protein GWCH70_1239 (Geobacillus sp. (strain WCH70)).